A 480-amino-acid chain; its full sequence is Siroheme synthase 1 (480 aa).

A precorrin-2 dehydrogenase /sirohydrochlorin ferrochelatase region spans residues 1–203 (MNYLPIFADL…GQLEQAEGEL (203 aa)). NAD(+) contacts are provided by residues 22 to 23 (EV) and 43 to 44 (LA). Phosphoserine is present on Ser-128. The segment at 222-480 (GEVALVGAGP…DSRPAVVNLA (259 aa)) is uroporphyrinogen-III C-methyltransferase. Pro-231 contacts S-adenosyl-L-methionine. Asp-254 acts as the Proton acceptor in catalysis. Lys-276 functions as the Proton donor in the catalytic mechanism. S-adenosyl-L-methionine-binding positions include 307 to 309 (GGD), Ile-312, 337 to 338 (TA), Met-389, and Gly-418.

It in the N-terminal section; belongs to the precorrin-2 dehydrogenase / sirohydrochlorin ferrochelatase family. In the C-terminal section; belongs to the precorrin methyltransferase family.

It catalyses the reaction uroporphyrinogen III + 2 S-adenosyl-L-methionine = precorrin-2 + 2 S-adenosyl-L-homocysteine + H(+). The enzyme catalyses precorrin-2 + NAD(+) = sirohydrochlorin + NADH + 2 H(+). It carries out the reaction siroheme + 2 H(+) = sirohydrochlorin + Fe(2+). The protein operates within cofactor biosynthesis; adenosylcobalamin biosynthesis; precorrin-2 from uroporphyrinogen III: step 1/1. It functions in the pathway cofactor biosynthesis; adenosylcobalamin biosynthesis; sirohydrochlorin from precorrin-2: step 1/1. It participates in porphyrin-containing compound metabolism; siroheme biosynthesis; precorrin-2 from uroporphyrinogen III: step 1/1. Its pathway is porphyrin-containing compound metabolism; siroheme biosynthesis; siroheme from sirohydrochlorin: step 1/1. The protein operates within porphyrin-containing compound metabolism; siroheme biosynthesis; sirohydrochlorin from precorrin-2: step 1/1. Its function is as follows. Multifunctional enzyme that catalyzes the SAM-dependent methylations of uroporphyrinogen III at position C-2 and C-7 to form precorrin-2 via precorrin-1. Then it catalyzes the NAD-dependent ring dehydrogenation of precorrin-2 to yield sirohydrochlorin. Finally, it catalyzes the ferrochelation of sirohydrochlorin to yield siroheme. The chain is Siroheme synthase 1 from Pectobacterium atrosepticum (strain SCRI 1043 / ATCC BAA-672) (Erwinia carotovora subsp. atroseptica).